A 173-amino-acid chain; its full sequence is Small ribosomal subunit protein mS25 (173 aa).

The protein belongs to the mitochondrion-specific ribosomal protein mS25 family. In terms of assembly, component of the mitochondrial ribosome small subunit (28S) which comprises a 12S rRNA and about 30 distinct proteins.

It localises to the mitochondrion. The polypeptide is Small ribosomal subunit protein mS25 (MRPS25) (Bos taurus (Bovine)).